Here is a 354-residue protein sequence, read N- to C-terminus: tRNA pseudouridine synthase D (354 aa).

Asp86 (nucleophile) is an active-site residue. Positions Gly162 to Leu309 constitute a TRUD domain.

Belongs to the pseudouridine synthase TruD family.

It carries out the reaction uridine(13) in tRNA = pseudouridine(13) in tRNA. Functionally, responsible for synthesis of pseudouridine from uracil-13 in transfer RNAs. The polypeptide is tRNA pseudouridine synthase D (Methylococcus capsulatus (strain ATCC 33009 / NCIMB 11132 / Bath)).